A 481-amino-acid polypeptide reads, in one-letter code: ATP synthase subunit beta (481 aa).

160–167 (GGAGVGKT) serves as a coordination point for ATP.

Belongs to the ATPase alpha/beta chains family. As to quaternary structure, F-type ATPases have 2 components, CF(1) - the catalytic core - and CF(0) - the membrane proton channel. CF(1) has five subunits: alpha(3), beta(3), gamma(1), delta(1), epsilon(1). CF(0) has three main subunits: a(1), b(2) and c(9-12). The alpha and beta chains form an alternating ring which encloses part of the gamma chain. CF(1) is attached to CF(0) by a central stalk formed by the gamma and epsilon chains, while a peripheral stalk is formed by the delta and b chains.

It is found in the cell inner membrane. The catalysed reaction is ATP + H2O + 4 H(+)(in) = ADP + phosphate + 5 H(+)(out). In terms of biological role, produces ATP from ADP in the presence of a proton gradient across the membrane. The catalytic sites are hosted primarily by the beta subunits. The chain is ATP synthase subunit beta from Myxococcus xanthus (strain DK1622).